We begin with the raw amino-acid sequence, 157 residues long: 3-hydroxyacyl-[acyl-carrier-protein] dehydratase FabZ (157 aa).

His-58 is an active-site residue.

Belongs to the thioester dehydratase family. FabZ subfamily.

It is found in the cytoplasm. It carries out the reaction a (3R)-hydroxyacyl-[ACP] = a (2E)-enoyl-[ACP] + H2O. In terms of biological role, involved in unsaturated fatty acids biosynthesis. Catalyzes the dehydration of short chain beta-hydroxyacyl-ACPs and long chain saturated and unsaturated beta-hydroxyacyl-ACPs. This chain is 3-hydroxyacyl-[acyl-carrier-protein] dehydratase FabZ, found in Rhizorhabdus wittichii (strain DSM 6014 / CCUG 31198 / JCM 15750 / NBRC 105917 / EY 4224 / RW1) (Sphingomonas wittichii).